A 543-amino-acid chain; its full sequence is Cytochrome P450 1B1 (543 aa).

A heme-binding site is contributed by cysteine 470.

Belongs to the cytochrome P450 family. It depends on heme as a cofactor. Constitutively expressed in retinal and kidney pericytes cells. Expressed in retinal endothelial cells (at protein level). Expressed in cardiac, pulmonary and aortic endothelial cells. Constitutively expressed in trabecular meshwork of the eye (at protein level).

It is found in the endoplasmic reticulum membrane. The protein resides in the microsome membrane. The protein localises to the mitochondrion. It catalyses the reaction an organic molecule + reduced [NADPH--hemoprotein reductase] + O2 = an alcohol + oxidized [NADPH--hemoprotein reductase] + H2O + H(+). The catalysed reaction is 17beta-estradiol + reduced [NADPH--hemoprotein reductase] + O2 = 2-hydroxy-17beta-estradiol + oxidized [NADPH--hemoprotein reductase] + H2O + H(+). It carries out the reaction 17beta-estradiol + reduced [NADPH--hemoprotein reductase] + O2 = 4-hydroxy-17beta-estradiol + oxidized [NADPH--hemoprotein reductase] + H2O + H(+). The enzyme catalyses estrone + reduced [NADPH--hemoprotein reductase] + O2 = 2-hydroxyestrone + oxidized [NADPH--hemoprotein reductase] + H2O + H(+). It catalyses the reaction estrone + reduced [NADPH--hemoprotein reductase] + O2 = 4-hydroxyestrone + oxidized [NADPH--hemoprotein reductase] + H2O + H(+). The catalysed reaction is testosterone + reduced [NADPH--hemoprotein reductase] + O2 = 6beta,17beta-dihydroxyandrost-4-en-3-one + oxidized [NADPH--hemoprotein reductase] + H2O + H(+). It carries out the reaction progesterone + reduced [NADPH--hemoprotein reductase] + O2 = 6beta-hydroxyprogesterone + oxidized [NADPH--hemoprotein reductase] + H2O + H(+). The enzyme catalyses progesterone + reduced [NADPH--hemoprotein reductase] + O2 = 16alpha-hydroxyprogesterone + oxidized [NADPH--hemoprotein reductase] + H2O + H(+). It catalyses the reaction all-trans-retinol + reduced [NADPH--hemoprotein reductase] + O2 = all-trans-retinal + oxidized [NADPH--hemoprotein reductase] + 2 H2O + H(+). The catalysed reaction is all-trans-retinal + reduced [NADPH--hemoprotein reductase] + O2 = all-trans-retinoate + oxidized [NADPH--hemoprotein reductase] + H2O + 2 H(+). It carries out the reaction (5Z,8Z,11Z,14Z)-eicosatetraenoate + reduced [NADPH--hemoprotein reductase] + O2 = (8R,9S)-epoxy-(5Z,11Z,14Z)-eicosatrienoate + oxidized [NADPH--hemoprotein reductase] + H2O + H(+). The enzyme catalyses (5Z,8Z,11Z,14Z)-eicosatetraenoate + reduced [NADPH--hemoprotein reductase] + O2 = (11R,12S)-epoxy-(5Z,8Z,14Z)-eicosatrienoate + oxidized [NADPH--hemoprotein reductase] + H2O + H(+). It catalyses the reaction (5Z,8Z,11Z,14Z)-eicosatetraenoate + reduced [NADPH--hemoprotein reductase] + O2 = (11S,12R)-epoxy-(5Z,8Z,14Z)-eicosatrienoate + oxidized [NADPH--hemoprotein reductase] + H2O + H(+). The catalysed reaction is (5Z,8Z,11Z,14Z)-eicosatetraenoate + reduced [NADPH--hemoprotein reductase] + O2 = (14R,15S)-epoxy-(5Z,8Z,11Z)-eicosatrienoate + oxidized [NADPH--hemoprotein reductase] + H2O + H(+). It carries out the reaction (5S)-hydroperoxy-(6E,8Z,11Z,14Z)-eicosatetraenoate = 5-oxo-(6E,8Z,11Z,14Z)-eicosatetraenoate + H2O. The enzyme catalyses (12S)-hydroperoxy-(5Z,8Z,10E,14Z)-eicosatetraenoate = 12-oxo-(5Z,8Z,10E,14Z)-eicosatetraenoate + H2O. It catalyses the reaction (13S)-hydroperoxy-(9Z,11E)-octadecadienoate = 13-oxo-(9Z,11E)-octadecadienoate + H2O. The catalysed reaction is (15S)-hydroperoxy-(5Z,8Z,11Z,13E)-eicosatetraenoate = 15-oxo-(5Z,8Z,11Z,13E)-eicosatetraenoate + H2O. It functions in the pathway steroid hormone biosynthesis. It participates in cofactor metabolism; retinol metabolism. The protein operates within lipid metabolism; arachidonate metabolism. Its activity is regulated as follows. Enzyme activity is increased by cytochrome b5. Enzyme activity is increased by liposomes containing anionic phospholipids, phosphatidic acid and cardiolipin. Inhibited by naringenin with an IC(50) of 5 uM. Functionally, a cytochrome P450 monooxygenase involved in the metabolism of various endogenous substrates, including fatty acids, steroid hormones and vitamins. Mechanistically, uses molecular oxygen inserting one oxygen atom into a substrate, and reducing the second into a water molecule, with two electrons provided by NADPH via cytochrome P450 reductase (NADPH--hemoprotein reductase). Exhibits catalytic activity for the formation of hydroxyestrogens from 17beta-estradiol (E2), namely 2- and 4-hydroxy E2. Metabolizes testosterone and progesterone to B or D ring hydroxylated metabolites. May act as a major enzyme for all-trans retinoic acid biosynthesis in extrahepatic tissues. Catalyzes two successive oxidative transformation of all-trans retinol to all-trans retinal and then to the active form all-trans retinoic acid. Catalyzes the epoxidation of double bonds of certain PUFA. Converts arachidonic acid toward epoxyeicosatrienoic acid (EpETrE) regioisomers, 8,9-, 11,12-, and 14,15- EpETrE, that function as lipid mediators in the vascular system. Additionally, displays dehydratase activity toward oxygenated eicosanoids hydroperoxyeicosatetraenoates (HpETEs). This activity is independent of cytochrome P450 reductase, NADPH, and O2. Also involved in the oxidative metabolism of xenobiotics, particularly converting polycyclic aromatic hydrocarbons and heterocyclic aryl amines procarcinogens to DNA-damaging products. Plays an important role in retinal vascular development. Under ambient/hyperoxic O2 conditions, promotes angiogenesis and capillary morphogenesis of retinal endothelial cells and pericytes, likely by metabolizing the oxygenated products symptomatic of oxidative stress. Also, contributes to oxidative homeostasis and ultrastructural organization and function of trabecular meshwork tissue through modulation of POSTN expression. The polypeptide is Cytochrome P450 1B1 (Mus musculus (Mouse)).